A 503-amino-acid polypeptide reads, in one-letter code: MEFSVKSGSPEKQRSACIVVGVFEPRRLSPIAEQLDKISDGYISALLRRGELEGKPGQTLLLHHVPNVLSERILLIGCGKERELDERQYKQVIQKTINTLNDTGSMEAVCFLTELHVKGRNNYWKVRQAVETAKETLYSFDQLKTNKSEPRRPLRKMVFNVPTRRELTSGERAIQHGLAIAAGIKAAKDLGNMPPNICNAAYLASQARQLADSYSKNVITRVIGEQQMKELGMHSYLAVGQGSQNESLMSVIEYKGNASEDARPIVLVGKGLTFDSGGISIKPSEGMDEMKYDMCGAAAVYGVMRMVAELQLPVNVIGVLAGCENMPGGRAYRPGDVLTTMSGQTVEVLNTDAEGRLVLCDVLTYVERFEPEAVIDVATLTGACVIALGHHITGLMANHNPLAHELIAASEQSGDRAWRLPLGDEYQEQLESNFADMANIGGRPGGAITAGCFLSRFTRKYNWAHLDIAGTAWRSGKAKGATGRPVALLAQFLLNRAGFNGEE.

Mn(2+) is bound by residues Lys270 and Asp275. Residue Lys282 is part of the active site. Mn(2+) contacts are provided by Asp293, Asp352, and Glu354. The active site involves Arg356.

It belongs to the peptidase M17 family. It depends on Mn(2+) as a cofactor.

It is found in the cytoplasm. It catalyses the reaction Release of an N-terminal amino acid, Xaa-|-Yaa-, in which Xaa is preferably Leu, but may be other amino acids including Pro although not Arg or Lys, and Yaa may be Pro. Amino acid amides and methyl esters are also readily hydrolyzed, but rates on arylamides are exceedingly low.. It carries out the reaction Release of an N-terminal amino acid, preferentially leucine, but not glutamic or aspartic acids.. In terms of biological role, presumably involved in the processing and regular turnover of intracellular proteins. Catalyzes the removal of unsubstituted N-terminal amino acids from various peptides. This chain is Probable cytosol aminopeptidase, found in Shigella dysenteriae serotype 1 (strain Sd197).